We begin with the raw amino-acid sequence, 1444 residues long: Adhesin P1 (1444 aa).

The first 30 residues, Met-1–Gly-30, serve as a signal peptide directing secretion. Disordered stretches follow at residues Gln-231–Arg-283, Ile-845–Asn-885, and Gly-927–Gly-949. Basic and acidic residues predominate over residues Leu-240–Ser-257. Positions Glu-258–Thr-272 are enriched in low complexity. Composition is skewed to polar residues over residues Lys-851–Asp-860 and Val-868–Thr-878. A compositionally biased stretch (basic and acidic residues) spans Phe-933–Thr-946. The chain crosses the membrane as a helical span at residues Val-1353–Leu-1373. A disordered region spans residues Asn-1419–Gln-1444. Residues Lys-1431–Gln-1444 are compositionally biased toward pro residues.

Belongs to the adhesin P1 family.

Its subcellular location is the cell membrane. The protein is the major adhesin mediating the attachment of this mycoplasma to the ciliated epithelium. The sequence is that of Adhesin P1 (mgpA) from Mycoplasma genitalium (strain ATCC 33530 / DSM 19775 / NCTC 10195 / G37) (Mycoplasmoides genitalium).